Consider the following 284-residue polypeptide: Nucleotide-binding protein VSAL_I0495 (284 aa).

8–15 contacts ATP; that stretch reads GNSGAGKS. Residue 56-59 participates in GTP binding; the sequence is DIRN.

This sequence belongs to the RapZ-like family.

Functionally, displays ATPase and GTPase activities. The chain is Nucleotide-binding protein VSAL_I0495 from Aliivibrio salmonicida (strain LFI1238) (Vibrio salmonicida (strain LFI1238)).